An 863-amino-acid chain; its full sequence is Eukaryotic translation initiation factor 3 subunit C (863 aa).

Residues 1 to 92 (MSRFFRGGDD…VKSAKDKRFD (92 aa)) are disordered. Over residues 16-53 (SSDEEELYSTSEEEEEEDQDQEESSEEEDEEESSDEDE) the composition is skewed to acidic residues. Over residues 79–92 (GATKVKSAKDKRFD) the composition is skewed to basic and acidic residues. The PCI domain maps to 604 to 778 (FHMHINLELL…KTVIFRKGVE (175 aa)). The interval 808–863 (TQGSANAFSRKDGRQGGQRGGGQRSGRGGARAGGNAQRQAGGTQFTGGALGAAVRG) is disordered. Positions 822-839 (QGGQRGGGQRSGRGGARA) are enriched in gly residues. A compositionally biased stretch (low complexity) spans 840–850 (GGNAQRQAGGT).

It belongs to the eIF-3 subunit C family. As to quaternary structure, component of the eukaryotic translation initiation factor 3 (eIF-3) complex.

It is found in the cytoplasm. Its function is as follows. Component of the eukaryotic translation initiation factor 3 (eIF-3) complex, which is involved in protein synthesis of a specialized repertoire of mRNAs and, together with other initiation factors, stimulates binding of mRNA and methionyl-tRNAi to the 40S ribosome. The eIF-3 complex specifically targets and initiates translation of a subset of mRNAs involved in cell proliferation. This chain is Eukaryotic translation initiation factor 3 subunit C, found in Chaetomium globosum (strain ATCC 6205 / CBS 148.51 / DSM 1962 / NBRC 6347 / NRRL 1970) (Soil fungus).